The following is a 178-amino-acid chain: Non-specific lipid transfer protein-like 1 (178 aa).

The first 26 residues, methionine 1–glycine 26, serve as a signal peptide directing secretion. 2 disulfide bridges follow: cysteine 50–cysteine 68 and cysteine 69–cysteine 110. Asparagine 99 is a glycosylation site (N-linked (GlcNAc...) asparagine). Alanine 149 carries the GPI-anchor amidated alanine lipid modification. A propeptide spans alanine 150 to phenylalanine 178 (removed in mature form).

This sequence belongs to the plant LTP family. O-glycosylated on hydroxyprolines; noncontiguous hydroxylproline residues are glycosylated with arabinogalactan. In terms of tissue distribution, expressed in roots, stems, leaves, flowers and seeds.

The protein localises to the vacuole. It is found in the aleurone grain membrane. This is Non-specific lipid transfer protein-like 1 (LTPL1) from Oryza sativa subsp. japonica (Rice).